A 180-amino-acid polypeptide reads, in one-letter code: Inner membrane-spanning protein YciB (180 aa).

5 helical membrane passes run 11 to 31 (ILFFVVYKLAGIREAAIALII), 52 to 72 (IIMGIAVVFFGTLTAYFNKVE), 76 to 96 (WKVTIVYALFALILLISQYGF), 121 to 141 (LAWAGFFILCMLINIYISQYC), and 149 to 169 (FKSFGIIAMTFIATLFTGIYV).

This sequence belongs to the YciB family.

Its subcellular location is the cell inner membrane. In terms of biological role, plays a role in cell envelope biogenesis, maintenance of cell envelope integrity and membrane homeostasis. This chain is Inner membrane-spanning protein YciB, found in Mannheimia succiniciproducens (strain KCTC 0769BP / MBEL55E).